The primary structure comprises 798 residues: Phenylalanine--tRNA ligase beta subunit (798 aa).

The tRNA-binding domain occupies 39-148 (GKDLDNVVIG…EDAPIGTEYR (110 aa)). One can recognise a B5 domain in the interval 401–477 (PQRAEISLNL…RMYGFDNIEA (77 aa)). Mg(2+) contacts are provided by Asp455, Asp461, Glu464, and Glu465. The region spanning 705-797 (SKYPEVLRDL…IKDKYNGEIR (93 aa)) is the FDX-ACB domain.

The protein belongs to the phenylalanyl-tRNA synthetase beta subunit family. Type 1 subfamily. As to quaternary structure, tetramer of two alpha and two beta subunits. Mg(2+) is required as a cofactor.

It is found in the cytoplasm. It carries out the reaction tRNA(Phe) + L-phenylalanine + ATP = L-phenylalanyl-tRNA(Phe) + AMP + diphosphate + H(+). The protein is Phenylalanine--tRNA ligase beta subunit of Fusobacterium nucleatum subsp. nucleatum (strain ATCC 25586 / DSM 15643 / BCRC 10681 / CIP 101130 / JCM 8532 / KCTC 2640 / LMG 13131 / VPI 4355).